A 249-amino-acid polypeptide reads, in one-letter code: MYPIQVIAEDPERTAQAAELATRLQQQMAESPFALVWGEQHLELRKLDEPKLGPVFVDFVEGAVAHRRKFGGGRGQSIAKAVGLKAGANPTVVDATAGLGRDAFVLASLGCQVTMLERHPVVAALLADGLQRAQQDSEIGGWMRERMSLRSGPALENLQQLGFTPDVVYLDPMFPHRQKSALVKKEMRVFQSLVGADLDADALLPAALAVAGKRVVVKRPDYAGYLNEMKPGMSIETKSNRFDVYVISR.

Residues 101 to 102 (RD), 117 to 118 (ER), and D171 contribute to the S-adenosyl-L-methionine site.

It belongs to the methyltransferase superfamily. RsmJ family.

It localises to the cytoplasm. The enzyme catalyses guanosine(1516) in 16S rRNA + S-adenosyl-L-methionine = N(2)-methylguanosine(1516) in 16S rRNA + S-adenosyl-L-homocysteine + H(+). Specifically methylates the guanosine in position 1516 of 16S rRNA. This chain is Ribosomal RNA small subunit methyltransferase J, found in Tolumonas auensis (strain DSM 9187 / NBRC 110442 / TA 4).